The sequence spans 123 residues: Large ribosomal subunit protein bL12 (123 aa).

The protein belongs to the bacterial ribosomal protein bL12 family. In terms of assembly, homodimer. Part of the ribosomal stalk of the 50S ribosomal subunit. Forms a multimeric L10(L12)X complex, where L10 forms an elongated spine to which 2 to 4 L12 dimers bind in a sequential fashion. Binds GTP-bound translation factors.

In terms of biological role, forms part of the ribosomal stalk which helps the ribosome interact with GTP-bound translation factors. Is thus essential for accurate translation. The polypeptide is Large ribosomal subunit protein bL12 (Zymomonas mobilis subsp. mobilis (strain ATCC 31821 / ZM4 / CP4)).